A 198-amino-acid chain; its full sequence is NAD(P)H dehydrogenase (quinone) (198 aa).

The region spanning 4–189 is the Flavodoxin-like domain; it reads VLVLYYSMYG…SIARYQGEYV (186 aa). FMN is bound by residues 10-15 and 78-80; these read SMYGHI and TRF. Tyrosine 12 lines the NAD(+) pocket. A substrate-binding site is contributed by tryptophan 98. FMN is bound by residues 113–118 and histidine 133; that span reads STGTGG.

This sequence belongs to the WrbA family. The cofactor is FMN.

The enzyme catalyses a quinone + NADH + H(+) = a quinol + NAD(+). The catalysed reaction is a quinone + NADPH + H(+) = a quinol + NADP(+). This chain is NAD(P)H dehydrogenase (quinone), found in Shigella dysenteriae serotype 1 (strain Sd197).